The following is a 229-amino-acid chain: Germin-like protein 12-1 (229 aa).

The first 22 residues, 1–22 (MASSNFFLPTALIALVATQAMA), serve as a signal peptide directing secretion. An intrachain disulfide couples cysteine 32 to cysteine 47. Residues 62-217 (ANLDKPMDTT…AFQVDKKAVD (156 aa)) form the Cupin type-1 domain. Residue asparagine 78 is glycosylated (N-linked (GlcNAc...) asparagine). Residues histidine 111, histidine 113, glutamate 118, and histidine 162 each contribute to the Mn(2+) site.

Belongs to the germin family. As to quaternary structure, oligomer (believed to be a pentamer but probably hexamer).

The protein resides in the secreted. Its subcellular location is the extracellular space. The protein localises to the apoplast. Its function is as follows. May play a role in plant defense. Probably has no oxalate oxidase activity even if the active site is conserved. The sequence is that of Germin-like protein 12-1 from Oryza sativa subsp. japonica (Rice).